Here is a 117-residue protein sequence, read N- to C-terminus: UPF0251 protein cbdbA217 (117 aa).

Belongs to the UPF0251 family.

The polypeptide is UPF0251 protein cbdbA217 (Dehalococcoides mccartyi (strain CBDB1)).